The sequence spans 376 residues: Thymidine kinase (376 aa).

The tract at residues 1 to 38 (MASYPCHQHASAFDQAARSRGHNNRRTALRPRRQQKAT) is disordered. Residues 19-35 (SRGHNNRRTALRPRRQQ) are compositionally biased toward basic residues. An ATP-binding site is contributed by 56 to 63 (GPHGMGKT). Residue Glu83 is the Proton acceptor of the active site. Residues Tyr101 and Gln125 each coordinate substrate. Arg216 serves as a coordination point for ATP. Arg222 lines the substrate pocket.

The protein belongs to the herpesviridae thymidine kinase family. Homodimer.

The enzyme catalyses thymidine + ATP = dTMP + ADP + H(+). Its function is as follows. Catalyzes the transfer of the gamma-phospho group of ATP to thymidine to generate dTMP in the salvage pathway of pyrimidine synthesis. The dTMP serves as a substrate for DNA polymerase during viral DNA replication. Allows the virus to be reactivated and to grow in non-proliferative cells lacking a high concentration of phosphorylated nucleic acid precursors. In Homo sapiens (Human), this protein is Thymidine kinase.